The sequence spans 253 residues: Transcriptional regulatory protein TcrA (253 aa).

A Response regulatory domain is found at 24-138; that stretch reads RILVVEDEPK…ELFARLRALS (115 aa). At Asp-73 the chain carries 4-aspartylphosphate. A DNA-binding region (ompR/PhoB-type) is located at residues 146-244; sequence PPTLEAGDLR…IRGAGYRLRK (99 aa).

Interacts with HK2. Post-translationally, phosphorylated by HK2.

The protein localises to the cytoplasm. Its function is as follows. Member of the three-protein two-component system HK1/HK2/TcrA. In Mycobacterium tuberculosis (strain ATCC 25618 / H37Rv), this protein is Transcriptional regulatory protein TcrA (tcrA).